A 206-amino-acid chain; its full sequence is N-(5'-phosphoribosyl)anthranilate isomerase (206 aa).

The protein belongs to the TrpF family.

The catalysed reaction is N-(5-phospho-beta-D-ribosyl)anthranilate = 1-(2-carboxyphenylamino)-1-deoxy-D-ribulose 5-phosphate. The protein operates within amino-acid biosynthesis; L-tryptophan biosynthesis; L-tryptophan from chorismate: step 3/5. This Pseudomonas savastanoi pv. phaseolicola (strain 1448A / Race 6) (Pseudomonas syringae pv. phaseolicola (strain 1448A / Race 6)) protein is N-(5'-phosphoribosyl)anthranilate isomerase.